The following is a 503-amino-acid chain: ATP synthase subunit alpha (503 aa).

Glycine 170–threonine 177 is a binding site for ATP.

It belongs to the ATPase alpha/beta chains family. As to quaternary structure, F-type ATPases have 2 components, CF(1) - the catalytic core - and CF(0) - the membrane proton channel. CF(1) has five subunits: alpha(3), beta(3), gamma(1), delta(1), epsilon(1). CF(0) has four main subunits: a, b, b' and c.

Its subcellular location is the cellular thylakoid membrane. The catalysed reaction is ATP + H2O + 4 H(+)(in) = ADP + phosphate + 5 H(+)(out). Produces ATP from ADP in the presence of a proton gradient across the membrane. The alpha chain is a regulatory subunit. The polypeptide is ATP synthase subunit alpha (Rippkaea orientalis (strain PCC 8801 / RF-1) (Cyanothece sp. (strain PCC 8801))).